We begin with the raw amino-acid sequence, 271 residues long: tRNA pseudouridine synthase A (271 aa).

D52 (nucleophile) is an active-site residue. Y110 contacts substrate.

This sequence belongs to the tRNA pseudouridine synthase TruA family. Homodimer.

It carries out the reaction uridine(38/39/40) in tRNA = pseudouridine(38/39/40) in tRNA. Functionally, formation of pseudouridine at positions 38, 39 and 40 in the anticodon stem and loop of transfer RNAs. The chain is tRNA pseudouridine synthase A from Maridesulfovibrio salexigens (strain ATCC 14822 / DSM 2638 / NCIMB 8403 / VKM B-1763) (Desulfovibrio salexigens).